The following is an 89-amino-acid chain: Small ribosomal subunit protein uS15 (89 aa).

It belongs to the universal ribosomal protein uS15 family. As to quaternary structure, part of the 30S ribosomal subunit. Forms a bridge to the 50S subunit in the 70S ribosome, contacting the 23S rRNA.

Its function is as follows. One of the primary rRNA binding proteins, it binds directly to 16S rRNA where it helps nucleate assembly of the platform of the 30S subunit by binding and bridging several RNA helices of the 16S rRNA. Functionally, forms an intersubunit bridge (bridge B4) with the 23S rRNA of the 50S subunit in the ribosome. In Nitrosospira multiformis (strain ATCC 25196 / NCIMB 11849 / C 71), this protein is Small ribosomal subunit protein uS15.